We begin with the raw amino-acid sequence, 179 residues long: MARLQEFYKEKVVPGLIEKFGYKSVMEVPRITKITLNMGLGEAVADKKIIENAVGDLTKIAGQKPVITKARKAIAGFKIRQGYPIGAMVTLRGQAMYEFLDRFVTVALPRVRDFRGVSGRAFDGRGNYNIGVKEQIIFPEIDYDKIDALRGLNISITTTAKTDDEAKALLASFKFPFRN.

This sequence belongs to the universal ribosomal protein uL5 family. As to quaternary structure, part of the 50S ribosomal subunit; part of the 5S rRNA/L5/L18/L25 subcomplex. Contacts the 5S rRNA and the P site tRNA. Forms a bridge to the 30S subunit in the 70S ribosome.

This is one of the proteins that bind and probably mediate the attachment of the 5S RNA into the large ribosomal subunit, where it forms part of the central protuberance. In the 70S ribosome it contacts protein S13 of the 30S subunit (bridge B1b), connecting the 2 subunits; this bridge is implicated in subunit movement. Contacts the P site tRNA; the 5S rRNA and some of its associated proteins might help stabilize positioning of ribosome-bound tRNAs. The chain is Large ribosomal subunit protein uL5 from Paraburkholderia phymatum (strain DSM 17167 / CIP 108236 / LMG 21445 / STM815) (Burkholderia phymatum).